Reading from the N-terminus, the 87-residue chain is Large ribosomal subunit protein eL31 (87 aa).

It belongs to the eukaryotic ribosomal protein eL31 family.

The chain is Large ribosomal subunit protein eL31 (rpl31e) from Methanocaldococcus jannaschii (strain ATCC 43067 / DSM 2661 / JAL-1 / JCM 10045 / NBRC 100440) (Methanococcus jannaschii).